A 307-amino-acid polypeptide reads, in one-letter code: Protoheme IX farnesyltransferase (307 aa).

8 consecutive transmembrane segments (helical) span residues M32–F52, F65–I85, P108–L128, P131–W151, L158–I178, I186–A206, L251–L271, and F287–F307.

This sequence belongs to the UbiA prenyltransferase family. Protoheme IX farnesyltransferase subfamily. As to quaternary structure, interacts with CtaA.

The protein localises to the cell membrane. The enzyme catalyses heme b + (2E,6E)-farnesyl diphosphate + H2O = Fe(II)-heme o + diphosphate. It functions in the pathway porphyrin-containing compound metabolism; heme O biosynthesis; heme O from protoheme: step 1/1. Functionally, converts heme B (protoheme IX) to heme O by substitution of the vinyl group on carbon 2 of heme B porphyrin ring with a hydroxyethyl farnesyl side group. The polypeptide is Protoheme IX farnesyltransferase (Bacillus mycoides (strain KBAB4) (Bacillus weihenstephanensis)).